The following is a 662-amino-acid chain: p-hydroxybenzoic acid efflux pump subunit AaeB (662 aa).

11 consecutive transmembrane segments (helical) span residues 22 to 42 (FAFK…HLQL), 52 to 72 (AAIV…SGAI), 76 to 96 (GMLR…IIIA), 102 to 122 (VVML…SSLV), 129 to 149 (IFGL…GTPL), 161 to 181 (EIVL…PRSI), 378 to 398 (LFWL…IAVV), 415 to 435 (FLFG…FIMP), 439 to 459 (QSML…GLEV), 465 to 485 (GSLG…PMTF), and 491 to 511 (LDSA…IMLI).

The protein belongs to the aromatic acid exporter ArAE (TC 2.A.85) family.

It localises to the cell inner membrane. Functionally, forms an efflux pump with AaeA. Could function as a metabolic relief valve, allowing to eliminate certain compounds when they accumulate to high levels in the cell. This Pectobacterium atrosepticum (strain SCRI 1043 / ATCC BAA-672) (Erwinia carotovora subsp. atroseptica) protein is p-hydroxybenzoic acid efflux pump subunit AaeB.